We begin with the raw amino-acid sequence, 218 residues long: Protein GrpE (218 aa).

Residues 1 to 21 are compositionally biased toward basic and acidic residues; sequence MSDKQREAERQQSEDKAHSEA. The tract at residues 1–66 is disordered; sequence MSDKQREAER…LEEARARAEE (66 aa). Over residues 24–36 the composition is skewed to low complexity; that stretch reads AEAGQAPEAQAAE.

Belongs to the GrpE family. Homodimer.

Its subcellular location is the cytoplasm. In terms of biological role, participates actively in the response to hyperosmotic and heat shock by preventing the aggregation of stress-denatured proteins, in association with DnaK and GrpE. It is the nucleotide exchange factor for DnaK and may function as a thermosensor. Unfolded proteins bind initially to DnaJ; upon interaction with the DnaJ-bound protein, DnaK hydrolyzes its bound ATP, resulting in the formation of a stable complex. GrpE releases ADP from DnaK; ATP binding to DnaK triggers the release of the substrate protein, thus completing the reaction cycle. Several rounds of ATP-dependent interactions between DnaJ, DnaK and GrpE are required for fully efficient folding. The sequence is that of Protein GrpE from Alkalilimnicola ehrlichii (strain ATCC BAA-1101 / DSM 17681 / MLHE-1).